We begin with the raw amino-acid sequence, 242 residues long: ATP synthase subunit a (242 aa).

6 helical membrane passes run 29–49 (SSIY…LAFY), 84–104 (FIPL…LGMT), 114–134 (IIVT…VGFV), 140–160 (FLTL…MIVI), 189–209 (VIAG…IPLM), and 210–230 (MILI…FTIL).

This sequence belongs to the ATPase A chain family. F-type ATPases have 2 components, CF(1) - the catalytic core - and CF(0) - the membrane proton channel. CF(1) has five subunits: alpha(3), beta(3), gamma(1), delta(1), epsilon(1). CF(0) has three main subunits: a(1), b(2) and c(9-12). The alpha and beta chains form an alternating ring which encloses part of the gamma chain. CF(1) is attached to CF(0) by a central stalk formed by the gamma and epsilon chains, while a peripheral stalk is formed by the delta and b chains.

It is found in the cell inner membrane. Its function is as follows. Key component of the proton channel; it plays a direct role in the translocation of protons across the membrane. In Rickettsia massiliae (strain Mtu5), this protein is ATP synthase subunit a.